The sequence spans 69 residues: Putative membrane protein insertion efficiency factor (69 aa).

The protein belongs to the UPF0161 family.

The protein resides in the cell membrane. Functionally, could be involved in insertion of integral membrane proteins into the membrane. The chain is Putative membrane protein insertion efficiency factor from Thermomicrobium roseum (strain ATCC 27502 / DSM 5159 / P-2).